Reading from the N-terminus, the 485-residue chain is Glutamyl-tRNA(Gln) amidotransferase subunit A (485 aa).

Active-site charge relay system residues include K79 and S154. The active-site Acyl-ester intermediate is the S178.

It belongs to the amidase family. GatA subfamily. As to quaternary structure, heterotrimer of A, B and C subunits.

It catalyses the reaction L-glutamyl-tRNA(Gln) + L-glutamine + ATP + H2O = L-glutaminyl-tRNA(Gln) + L-glutamate + ADP + phosphate + H(+). In terms of biological role, allows the formation of correctly charged Gln-tRNA(Gln) through the transamidation of misacylated Glu-tRNA(Gln) in organisms which lack glutaminyl-tRNA synthetase. The reaction takes place in the presence of glutamine and ATP through an activated gamma-phospho-Glu-tRNA(Gln). This is Glutamyl-tRNA(Gln) amidotransferase subunit A from Carboxydothermus hydrogenoformans (strain ATCC BAA-161 / DSM 6008 / Z-2901).